A 200-amino-acid polypeptide reads, in one-letter code: MSAGKAQIGKPAPEFQAKAVMPGGEFKDIKLADYRGKYVVFFFYPLDFTFVCPTEIIAFSDRAEEFRKINCELIAASVDSHFCHLAWTNTSRKEGGLGSMKIPLVADTKRTISQDYGVLKEDEGISFRGLFIIDDKGILRQITINDLPVGRSVDETLRLVQAFQHTDKFGEVCPAGWKPGSDTIKPDISKSKEYFSKQKA.

Positions alanine 6–histidine 165 constitute a Thioredoxin domain. Cysteine 52 acts as the Cysteine sulfenic acid (-SOH) intermediate in catalysis.

The protein belongs to the peroxiredoxin family. AhpC/Prx1 subfamily. As to quaternary structure, homodimer; disulfide-linked, upon oxidation.

The enzyme catalyses a hydroperoxide + [thioredoxin]-dithiol = an alcohol + [thioredoxin]-disulfide + H2O. Thiol-specific peroxidase that catalyzes the reduction of hydrogen peroxide and organic hydroperoxides to water and alcohols, respectively. Plays a role in cell protection against oxidative stress by detoxifying peroxides and as sensor of hydrogen peroxide-mediated signaling events. The polypeptide is Peroxiredoxin (Cynops pyrrhogaster (Japanese fire-bellied newt)).